A 156-amino-acid polypeptide reads, in one-letter code: ATP synthase subunit b (156 aa).

A helical membrane pass occupies residues 12–32; that stretch reads LAFAIFVWFCMKLVWPPITAA.

It belongs to the ATPase B chain family. As to quaternary structure, F-type ATPases have 2 components, F(1) - the catalytic core - and F(0) - the membrane proton channel. F(1) has five subunits: alpha(3), beta(3), gamma(1), delta(1), epsilon(1). F(0) has three main subunits: a(1), b(2) and c(10-14). The alpha and beta chains form an alternating ring which encloses part of the gamma chain. F(1) is attached to F(0) by a central stalk formed by the gamma and epsilon chains, while a peripheral stalk is formed by the delta and b chains.

Its subcellular location is the cell inner membrane. Functionally, f(1)F(0) ATP synthase produces ATP from ADP in the presence of a proton or sodium gradient. F-type ATPases consist of two structural domains, F(1) containing the extramembraneous catalytic core and F(0) containing the membrane proton channel, linked together by a central stalk and a peripheral stalk. During catalysis, ATP synthesis in the catalytic domain of F(1) is coupled via a rotary mechanism of the central stalk subunits to proton translocation. Its function is as follows. Component of the F(0) channel, it forms part of the peripheral stalk, linking F(1) to F(0). The protein is ATP synthase subunit b of Stutzerimonas stutzeri (strain A1501) (Pseudomonas stutzeri).